Here is a 160-residue protein sequence, read N- to C-terminus: Ribosomal RNA large subunit methyltransferase H (160 aa).

S-adenosyl-L-methionine contacts are provided by residues L77, G109, and 128 to 133 (FGRITL).

It belongs to the RNA methyltransferase RlmH family. In terms of assembly, homodimer.

It localises to the cytoplasm. It carries out the reaction pseudouridine(1915) in 23S rRNA + S-adenosyl-L-methionine = N(3)-methylpseudouridine(1915) in 23S rRNA + S-adenosyl-L-homocysteine + H(+). Specifically methylates the pseudouridine at position 1915 (m3Psi1915) in 23S rRNA. This chain is Ribosomal RNA large subunit methyltransferase H, found in Oenococcus oeni (strain ATCC BAA-331 / PSU-1).